The chain runs to 249 residues: Pyridoxine 5'-phosphate synthase (249 aa).

A 3-amino-2-oxopropyl phosphate-binding site is contributed by Asn-10. 12 to 13 (DH) serves as a coordination point for 1-deoxy-D-xylulose 5-phosphate. Arg-21 contacts 3-amino-2-oxopropyl phosphate. His-46 (proton acceptor) is an active-site residue. The 1-deoxy-D-xylulose 5-phosphate site is built by Arg-48 and His-53. Residue Glu-73 is the Proton acceptor of the active site. Thr-103 is a binding site for 1-deoxy-D-xylulose 5-phosphate. His-194 functions as the Proton donor in the catalytic mechanism. 3-amino-2-oxopropyl phosphate is bound by residues Gly-195 and 216–217 (GH).

Belongs to the PNP synthase family. As to quaternary structure, homooctamer; tetramer of dimers.

Its subcellular location is the cytoplasm. It catalyses the reaction 3-amino-2-oxopropyl phosphate + 1-deoxy-D-xylulose 5-phosphate = pyridoxine 5'-phosphate + phosphate + 2 H2O + H(+). The protein operates within cofactor biosynthesis; pyridoxine 5'-phosphate biosynthesis; pyridoxine 5'-phosphate from D-erythrose 4-phosphate: step 5/5. Catalyzes the complicated ring closure reaction between the two acyclic compounds 1-deoxy-D-xylulose-5-phosphate (DXP) and 3-amino-2-oxopropyl phosphate (1-amino-acetone-3-phosphate or AAP) to form pyridoxine 5'-phosphate (PNP) and inorganic phosphate. The sequence is that of Pyridoxine 5'-phosphate synthase from Rhodospirillum rubrum (strain ATCC 11170 / ATH 1.1.1 / DSM 467 / LMG 4362 / NCIMB 8255 / S1).